Here is a 65-residue protein sequence, read N- to C-terminus: Crotamine CRO1 (65 aa).

An N-terminal signal peptide occupies residues 1–22; the sequence is MKILYLLFAFLFLAFLSEPGNA. Disulfide bonds link Cys26-Cys58, Cys33-Cys52, and Cys40-Cys59.

Belongs to the crotamine-myotoxin family. As to quaternary structure, monomer. As to expression, expressed by the venom gland.

It localises to the secreted. Its function is as follows. Cationic peptide that possesses multiple functions. It acts as a cell-penetrating peptide (CPP), and as a potent voltage-gated potassium channel (Kv) inhibitor. It exhibits antimicrobial activities, hind limb paralysis, and severe muscle necrosis by a non-enzymatic mechanism. In Crotalus durissus terrificus (South American rattlesnake), this protein is Crotamine CRO1 (CRO1).